We begin with the raw amino-acid sequence, 148 residues long: Azurin (148 aa).

The signal sequence occupies residues 1–20; the sequence is MLRKLAAVSLLSLLSAPLLA. In terms of domain architecture, Plastocyanin-like spans 21–148; sequence AECSVDIQGN…ALMKGTLTLK (128 aa). Cys-23 and Cys-46 are disulfide-bonded. 4 residues coordinate Cu cation: His-66, Cys-132, His-137, and Met-141.

It localises to the periplasm. In terms of biological role, transfers electrons from cytochrome c551 to cytochrome oxidase. This Pseudomonas aeruginosa (strain ATCC 15692 / DSM 22644 / CIP 104116 / JCM 14847 / LMG 12228 / 1C / PRS 101 / PAO1) protein is Azurin (azu).